Here is a 77-residue protein sequence, read N- to C-terminus: Protein KleA (77 aa).

The protein to E.coli KleC (kcrB1).

The polypeptide is Protein KleA (kleA) (Escherichia coli).